A 229-amino-acid chain; its full sequence is Potassium/proton antiporter CemA (229 aa).

The next 3 membrane-spanning stretches (helical) occupy residues 6–26 (AFIPFFDFTSIVFLPWLISLC), 107–127 (ILHFSTNLISFVILSGYSFWG), and 189–209 (ILSGLVSTFPVILDTIFKYWI).

The protein belongs to the CemA family.

It is found in the plastid. It localises to the chloroplast inner membrane. The enzyme catalyses K(+)(in) + H(+)(out) = K(+)(out) + H(+)(in). Its function is as follows. Contributes to K(+)/H(+) antiport activity by supporting proton efflux to control proton extrusion and homeostasis in chloroplasts in a light-dependent manner to modulate photosynthesis. Prevents excessive induction of non-photochemical quenching (NPQ) under continuous-light conditions. Indirectly promotes efficient inorganic carbon uptake into chloroplasts. This is Potassium/proton antiporter CemA from Lepidium virginicum (Virginia pepperweed).